The sequence spans 4114 residues: Ferrichrome siderophore peptide synthetase (4114 aa).

Carrier domains follow at residues 797–874 (DPAT…QSSG), 1947–2021 (TDSE…IDKL), 3020–3093 (TQSE…MQSS), and 3574–3650 (QALS…SQTN). An O-(pantetheine 4'-phosphoryl)serine mark is found at Ser-835, Ser-1982, Ser-3054, and Ser-3611. The disordered stretch occupies residues 4040–4061 (LDYSHHSQHSTHDRTPPSTPHV). Basic and acidic residues predominate over residues 4041–4054 (DYSHHSQHSTHDRT).

The protein belongs to the ATP-dependent AMP-binding enzyme family. Pantetheine 4'-phosphate is required as a cofactor.

Its pathway is siderophore biosynthesis; ferrichrome biosynthesis. Functionally, multidomain peptide synthetase involved in ferrichrome biosynthesis. This Mycosarcoma maydis (Corn smut fungus) protein is Ferrichrome siderophore peptide synthetase (SID2).